Consider the following 86-residue polypeptide: Weak neurotoxin 6 (86 aa).

Residues 1 to 21 form the signal peptide; the sequence is MKTLLLTLVVVTIVCLDLGYT. Cystine bridges form between cysteine 24–cysteine 45, cysteine 27–cysteine 32, cysteine 38–cysteine 63, cysteine 67–cysteine 78, and cysteine 79–cysteine 84.

It belongs to the three-finger toxin family. Ancestral subfamily. Orphan group II sub-subfamily. In terms of tissue distribution, expressed by the venom gland.

The protein resides in the secreted. Binds with low affinity to muscular (alpha-1-beta-1-delta-epsilon/CHRNA1-CHRNB1-CHRND-CHRNE) and very low affinity to neuronal (alpha-7/CHRNA7) nicotinic acetylcholine receptor (nAChR). The polypeptide is Weak neurotoxin 6 (Naja sputatrix (Malayan spitting cobra)).